A 394-amino-acid chain; its full sequence is Elongation factor Tu (394 aa).

The 196-residue stretch at 10-205 folds into the tr-type G domain; that stretch reads KPHVNIGTIG…VDTWIPLPPR (196 aa). The G1 stretch occupies residues 19–26; it reads GHVDHGKT. 19 to 26 contacts GTP; the sequence is GHVDHGKT. T26 is a Mg(2+) binding site. Positions 60-64 are G2; the sequence is GITIN. A G3 region spans residues 81–84; that stretch reads DCPG. Residues 81-85 and 136-139 each bind GTP; these read DCPGH and NKCD. Residues 136-139 are G4; it reads NKCD. The tract at residues 174 to 176 is G5; the sequence is SAL.

Belongs to the TRAFAC class translation factor GTPase superfamily. Classic translation factor GTPase family. EF-Tu/EF-1A subfamily. In terms of assembly, monomer.

The protein localises to the cytoplasm. It carries out the reaction GTP + H2O = GDP + phosphate + H(+). Functionally, GTP hydrolase that promotes the GTP-dependent binding of aminoacyl-tRNA to the A-site of ribosomes during protein biosynthesis. The sequence is that of Elongation factor Tu from Bacteroides fragilis (strain ATCC 25285 / DSM 2151 / CCUG 4856 / JCM 11019 / LMG 10263 / NCTC 9343 / Onslow / VPI 2553 / EN-2).